The sequence spans 73 residues: uncharacterized protein (73 aa).

Belongs to the asfivirus DP63R family.

This is an uncharacterized protein from Ornithodoros (relapsing fever ticks).